Consider the following 294-residue polypeptide: Shell matrix protein (294 aa).

As to expression, component of the organic matrix of calcified shell layers like nacre and prisms.

It is found in the secreted. The chain is Shell matrix protein from Mytilus californianus (California mussel).